The following is a 1942-amino-acid chain: Probable helicase with zinc finger domain (1942 aa).

The segment at 178-206 (SEEYTLCKRFLEQGICRYGAQCTSAHSQE) adopts a C3H1-type zinc-finger fold. Ser248 carries the post-translational modification Phosphoserine. 668-675 (GPYGTGKT) serves as a coordination point for ATP. Residues 794–797 (DEAA) carry the DEAA box motif. The segment covering 1117–1127 (SGSTNKQQQSP) has biased composition (polar residues). The segment at 1117–1141 (SGSTNKQQQSPPKGKSLHHTQNDHF) is disordered. Thr1163 is subject to Phosphothreonine. Arg1245 carries the omega-N-methylarginine modification. Disordered regions lie at residues 1246 to 1345 (GSPI…INLP), 1386 to 1429 (NLPE…GPNN), 1527 to 1552 (QGSA…GLHQ), and 1608 to 1637 (RQVQ…FNDN). Basic and acidic residues-rich tracts occupy residues 1268–1281 (HQEK…RNGK) and 1292–1308 (NKIR…KQVD). A compositionally biased stretch (low complexity) spans 1399–1412 (NQVVQQQSQLNQQP). Position 1614 is a phosphoserine (Ser1614). Over residues 1623 to 1636 (SSTDHSSHFSNFND) the composition is skewed to low complexity. Ser1645, Ser1738, Ser1741, and Ser1766 each carry phosphoserine. Disordered regions lie at residues 1729-1779 (FHPL…TPQD), 1792-1843 (NQSS…PEDQ), and 1870-1942 (MPNK…SYFK). Residues 1731-1745 (PLSSRTVSSSSLPSL) show a composition bias toward low complexity. 2 stretches are compositionally biased toward polar residues: residues 1761-1779 (RISS…TPQD) and 1792-1825 (NQSS…SRTA). 2 stretches are compositionally biased toward low complexity: residues 1876–1888 (AESA…QSSA) and 1920–1942 (LSLF…SYFK).

The protein belongs to the DNA2/NAM7 helicase family. As to quaternary structure, interacts with SMYD2. Interacts with POLR2A. Interacts with SMYD3; the interaction may bridge SMYD3 and RNA polymerase II. As to expression, expressed predominantly in thymus and brain. Expression is down-regulated in 28 of 95 tested cancer cell lines.

The protein localises to the nucleus. Functionally, may act as a helicase that plays a role in RNA metabolism in multiple tissues and organs within the developing embryo. In Homo sapiens (Human), this protein is Probable helicase with zinc finger domain (HELZ).